Reading from the N-terminus, the 503-residue chain is MSFELSAPVPLSDNSEAILEKEIGETVKIEGDLVEVYEINRTVDFIKSGNYNSVALQFPDEHLADSGKVASILTNLVEANVQILADTNYGSCCVDEVAAEHMSADAIVHYGRACLSPTSRLPVLYVFGRLPINLHKLEKCLTIPLDQNILLVSDTRWYYAQDSILKSLKTLGYQNVYESHLKERIEPNLEEASTSYTIPGRTYSLPKSLSLQDMTLLYIGPDSPTLSSILMSHYSLVNQFLSFDPLSNKIVEESSFTGAKLRRRYALVQRCRDAGVIGIVIGTLGVHRYLHVLNQLRKMILNAGKKPYMLAVGKLNPAKLANFQEIECFVLIACGENSLIDSKEFYRPIVTPFELVKALSSDMSWNNDFILSFDEVLKLSEGKQSKEPSEVLTEESAEPHFSLITGKFVNSTPMRHLDVTLETADAKNNDSSSASIEKRGMRSLAVNGVYSPAAAFLQSKSWSGLDSVDEGEGPSKLYEGQSGIAKGYVGEGSKEKIQRDFGK.

Residues cysteine 93, cysteine 114, and cysteine 334 each contribute to the [4Fe-4S] cluster site. Positions 464–503 are disordered; sequence GLDSVDEGEGPSKLYEGQSGIAKGYVGEGSKEKIQRDFGK. Basic and acidic residues predominate over residues 492 to 503; sequence GSKEKIQRDFGK.

The protein belongs to the DPH1/DPH2 family. DPH2 subfamily. Component of the 2-(3-amino-3-carboxypropyl)histidine synthase complex composed of dph1, dph2, dph3 and a NADH-dependent reductase, predominantly cbr1. It depends on [4Fe-4S] cluster as a cofactor.

It localises to the cytoplasm. It functions in the pathway protein modification; peptidyl-diphthamide biosynthesis. Required for the first step of diphthamide biosynthesis, a post-translational modification of histidine which occurs in elongation factor 2. Dph1 and dph2 transfer a 3-amino-3-carboxypropyl (ACP) group from S-adenosyl-L-methionine (SAM) to a histidine residue, the reaction is assisted by a reduction system comprising dph3 and a NADH-dependent reductase, predominantly cbr1. Facilitates the reduction of the catalytic iron-sulfur cluster found in the dph1 subunit. In Schizosaccharomyces pombe (strain 972 / ATCC 24843) (Fission yeast), this protein is 2-(3-amino-3-carboxypropyl)histidine synthase subunit 2.